The sequence spans 423 residues: Glucose-1-phosphate adenylyltransferase (423 aa).

Alpha-D-glucose 1-phosphate-binding positions include tyrosine 107, glycine 172, 187-188, and serine 205; that span reads EK.

Belongs to the bacterial/plant glucose-1-phosphate adenylyltransferase family. Homotetramer.

It carries out the reaction alpha-D-glucose 1-phosphate + ATP + H(+) = ADP-alpha-D-glucose + diphosphate. It participates in glycan biosynthesis; glycogen biosynthesis. Involved in the biosynthesis of ADP-glucose, a building block required for the elongation reactions to produce glycogen. Catalyzes the reaction between ATP and alpha-D-glucose 1-phosphate (G1P) to produce pyrophosphate and ADP-Glc. The protein is Glucose-1-phosphate adenylyltransferase of Cereibacter sphaeroides (strain ATCC 17029 / ATH 2.4.9) (Rhodobacter sphaeroides).